We begin with the raw amino-acid sequence, 608 residues long: uncharacterized protein (608 aa).

The first 38 residues, 1 to 38 (MWLQQRLKVFPGLLSSSWARRVLAVSGFLVIIYWYIFS), serve as a signal peptide directing secretion. The Extracellular segment spans residues 39–563 (GSLFRSFWYA…EEHMAKQYRG (525 aa)). N-linked (GlcNAc...) asparagine glycosylation occurs at asparagine 337. Residues 564–584 (LPFLFWFSVASLITLFHLFLF) traverse the membrane as a helical segment. The Cytoplasmic portion of the chain corresponds to 585-608 (KLIYNEYCGPGAKPLFRSKEDTSV).

Its subcellular location is the membrane. This is an uncharacterized protein from Xenopus tropicalis (Western clawed frog).